The chain runs to 378 residues: Carbamoyl phosphate synthase small chain (378 aa).

Residues 1 to 189 are CPSase; that stretch reads MTKPAILALA…DSHPEIPAGE (189 aa). The L-glutamine site is built by Ser-47, Gly-241, and Gly-243. Residues 193-378 enclose the Glutamine amidotransferase type-1 domain; the sequence is HVVAYDYGVK…RFISAMAERR (186 aa). The active-site Nucleophile is Cys-269. L-glutamine is bound by residues Leu-270, Gln-273, Asn-311, Gly-313, and Phe-314. Residues His-353 and Glu-355 contribute to the active site.

Belongs to the CarA family. As to quaternary structure, composed of two chains; the small (or glutamine) chain promotes the hydrolysis of glutamine to ammonia, which is used by the large (or ammonia) chain to synthesize carbamoyl phosphate. Tetramer of heterodimers (alpha,beta)4.

The enzyme catalyses hydrogencarbonate + L-glutamine + 2 ATP + H2O = carbamoyl phosphate + L-glutamate + 2 ADP + phosphate + 2 H(+). The catalysed reaction is L-glutamine + H2O = L-glutamate + NH4(+). It participates in amino-acid biosynthesis; L-arginine biosynthesis; carbamoyl phosphate from bicarbonate: step 1/1. The protein operates within pyrimidine metabolism; UMP biosynthesis via de novo pathway; (S)-dihydroorotate from bicarbonate: step 1/3. In terms of biological role, small subunit of the glutamine-dependent carbamoyl phosphate synthetase (CPSase). CPSase catalyzes the formation of carbamoyl phosphate from the ammonia moiety of glutamine, carbonate, and phosphate donated by ATP, constituting the first step of 2 biosynthetic pathways, one leading to arginine and/or urea and the other to pyrimidine nucleotides. The small subunit (glutamine amidotransferase) binds and cleaves glutamine to supply the large subunit with the substrate ammonia. This chain is Carbamoyl phosphate synthase small chain, found in Pseudomonas aeruginosa (strain ATCC 15692 / DSM 22644 / CIP 104116 / JCM 14847 / LMG 12228 / 1C / PRS 101 / PAO1).